A 750-amino-acid chain; its full sequence is Neprilysin (750 aa).

Polar residues predominate over residues 1 to 14 (MGKSESQMDITDIN). A disordered region spans residues 1–20 (MGKSESQMDITDINTPKPKK). Gly-2 is lipidated: N-myristoyl glycine. The Cytoplasmic portion of the chain corresponds to 2-28 (GKSESQMDITDINTPKPKKKQRWTPLE). A phosphoserine mark is found at Ser-4 and Ser-6. A Stop-transfer sequence motif is present at residues 16–23 (PKPKKKQR). A helical; Signal-anchor for type II membrane protein transmembrane segment spans residues 29-51 (ISLSVLVLLLTIIAVTMIALYAT). Over 52–750 (YDDGICKSSD…MNPEKKCRVW (699 aa)) the chain is Extracellular. A Peptidase M13 domain is found at 56 to 750 (ICKSSDCIKS…MNPEKKCRVW (695 aa)). Disulfide bonds link Cys-57-Cys-62, Cys-80-Cys-735, Cys-88-Cys-695, Cys-143-Cys-411, Cys-234-Cys-242, and Cys-621-Cys-747. Arg-103 is an a peptide binding site. An N-linked (GlcNAc...) asparagine glycan is attached at Asn-145. 4 N-linked (GlcNAc...) asparagine glycosylation sites follow: Asn-285, Asn-311, Asn-325, and Asn-335. His-584 contacts Zn(2+). The active site involves Glu-585. His-588 is a Zn(2+) binding site. N-linked (GlcNAc...) asparagine glycosylation occurs at Asn-628. Glu-647 serves as a coordination point for Zn(2+). Catalysis depends on Asp-651, which acts as the Proton donor.

This sequence belongs to the peptidase M13 family. It depends on Zn(2+) as a cofactor. Myristoylation is a determinant of membrane targeting. Post-translationally, glycosylation at Asn-628 is necessary both for surface expression and neutral endopeptidase activity.

The protein localises to the cell membrane. The catalysed reaction is Preferential cleavage of polypeptides between hydrophobic residues, particularly with Phe or Tyr at P1'.. The enzyme catalyses substance P + H2O = substance P(1-9) + L-Leu-L-Met-NH2. It carries out the reaction substance P + H2O = substance P(1-7) + L-Phe-Gly-L-Leu-L-Met-NH2. It catalyses the reaction neurotensin + H2O = neurotensin(1-11) + L-isoleucyl-L-leucine. The catalysed reaction is neurotensin + H2O = neurotensin(1-10) + L-tyrosyl-L-isoleucyl-L-leucine. Functionally, thermolysin-like specificity, but is almost confined on acting on polypeptides of up to 30 amino acids. Biologically important in the destruction of opioid peptides such as Met- and Leu-enkephalins by cleavage of a Gly-Phe bond. Catalyzes cleavage of bradykinin, substance P and neurotensin peptides. Able to cleave angiotensin-1, angiotensin-2 and angiotensin 1-9. Involved in the degradation of atrial natriuretic factor (ANF) and brain natriuretic factor (BNP(1-32)). Displays UV-inducible elastase activity toward skin preelastic and elastic fibers. This chain is Neprilysin (MME), found in Pongo abelii (Sumatran orangutan).